Here is a 252-residue protein sequence, read N- to C-terminus: Indole-3-glycerol phosphate synthase (252 aa).

Belongs to the TrpC family.

The catalysed reaction is 1-(2-carboxyphenylamino)-1-deoxy-D-ribulose 5-phosphate + H(+) = (1S,2R)-1-C-(indol-3-yl)glycerol 3-phosphate + CO2 + H2O. It functions in the pathway amino-acid biosynthesis; L-tryptophan biosynthesis; L-tryptophan from chorismate: step 4/5. This Listeria monocytogenes serovar 1/2a (strain ATCC BAA-679 / EGD-e) protein is Indole-3-glycerol phosphate synthase.